Consider the following 170-residue polypeptide: Elicitin-like protein 1 (170 aa).

The signal sequence occupies residues 1 to 19 (MFSKTLVVLAAVAAVTVNG). Intrachain disulfides connect cysteine 25-cysteine 91, cysteine 47-cysteine 76, and cysteine 71-cysteine 118. The segment at 122-170 (GGGSTPTTAPPTSTTPTTAPPTGTTPTTAPPAGTTPGVTPSPTTPKPAC) is disordered. The segment covering 126–162 (TPTTAPPTSTTPTTAPPTGTTPTTAPPAGTTPGVTPS) has biased composition (low complexity).

It belongs to the elicitin family.

It is found in the secreted. Its function is as follows. Induces local and distal defense responses (incompatible hypersensitive reaction) in plants from the solanaceae and cruciferae families. Elicits leaf necrosis and causes the accumulation of pathogenesis-related proteins. Might interact with the lipidic molecules of the plasma membrane. This chain is Elicitin-like protein 1 (POD-1), found in Pythium oligandrum (Mycoparasitic fungus).